The sequence spans 338 residues: Nuclear hormone receptor family member nhr-52 (338 aa).

The nuclear receptor DNA-binding region spans 1–75 (MKCLVCCSYA…IGMRFSEPKQ (75 aa)). 2 consecutive NR C4-type zinc fingers follow at residues 3–23 (CLVC…CSAC) and 39–63 (CKYD…FKKC). Positions 98 to 337 (KDGVHYSNFL…KKLVNDIIIR (240 aa)) constitute an NR LBD domain.

The protein belongs to the nuclear hormone receptor family.

Its subcellular location is the nucleus. Orphan nuclear receptor. This Caenorhabditis elegans protein is Nuclear hormone receptor family member nhr-52 (nhr-52).